The sequence spans 388 residues: GTPase Obg (388 aa).

The region spanning 1–159 is the Obg domain; sequence MKFVDEANIR…RSIKLELLLL (159 aa). The OBG-type G domain occupies 160–333; that stretch reads ADVGLLGMPN…LSIKMLDYIR (174 aa). GTP-binding positions include 166–173, 191–195, 213–216, 283–286, and 314–316; these read GMPNAGKS, FTTLV, DIPG, NKTD, and SAY. The Mg(2+) site is built by Ser-173 and Thr-193.

This sequence belongs to the TRAFAC class OBG-HflX-like GTPase superfamily. OBG GTPase family. Monomer. It depends on Mg(2+) as a cofactor.

It is found in the cytoplasm. Its function is as follows. An essential GTPase which binds GTP, GDP and possibly (p)ppGpp with moderate affinity, with high nucleotide exchange rates and a fairly low GTP hydrolysis rate. Plays a role in control of the cell cycle, stress response, ribosome biogenesis and in those bacteria that undergo differentiation, in morphogenesis control. This Shewanella frigidimarina (strain NCIMB 400) protein is GTPase Obg.